The chain runs to 351 residues: tRNA-specific 2-thiouridylase MnmA (351 aa).

6 to 13 (ALSGGTDS) provides a ligand contact to ATP. C96 serves as the catalytic Nucleophile. The cysteines at positions 96 and 193 are disulfide-linked. Residue G120 coordinates ATP. The interaction with tRNA stretch occupies residues 143–145 (KDQ). The active-site Cysteine persulfide intermediate is C193. The interaction with tRNA stretch occupies residues 298 to 299 (RY).

The protein belongs to the MnmA/TRMU family.

The protein resides in the cytoplasm. The catalysed reaction is S-sulfanyl-L-cysteinyl-[protein] + uridine(34) in tRNA + AH2 + ATP = 2-thiouridine(34) in tRNA + L-cysteinyl-[protein] + A + AMP + diphosphate + H(+). Functionally, catalyzes the 2-thiolation of uridine at the wobble position (U34) of tRNA, leading to the formation of s(2)U34. The chain is tRNA-specific 2-thiouridylase MnmA from Nitratidesulfovibrio vulgaris (strain DSM 19637 / Miyazaki F) (Desulfovibrio vulgaris).